The chain runs to 258 residues: Imidazole glycerol phosphate synthase subunit HisF (258 aa).

Residues Asp11 and Asp130 contribute to the active site.

Belongs to the HisA/HisF family. Heterodimer of HisH and HisF.

The protein resides in the cytoplasm. It catalyses the reaction 5-[(5-phospho-1-deoxy-D-ribulos-1-ylimino)methylamino]-1-(5-phospho-beta-D-ribosyl)imidazole-4-carboxamide + L-glutamine = D-erythro-1-(imidazol-4-yl)glycerol 3-phosphate + 5-amino-1-(5-phospho-beta-D-ribosyl)imidazole-4-carboxamide + L-glutamate + H(+). The protein operates within amino-acid biosynthesis; L-histidine biosynthesis; L-histidine from 5-phospho-alpha-D-ribose 1-diphosphate: step 5/9. In terms of biological role, IGPS catalyzes the conversion of PRFAR and glutamine to IGP, AICAR and glutamate. The HisF subunit catalyzes the cyclization activity that produces IGP and AICAR from PRFAR using the ammonia provided by the HisH subunit. This Shigella boydii serotype 18 (strain CDC 3083-94 / BS512) protein is Imidazole glycerol phosphate synthase subunit HisF.